An 878-amino-acid chain; its full sequence is Staphylococcal nuclease domain-containing protein 1 (878 aa).

2 TNase-like domains span residues 3–142 and 167–312; these read QYVS…IWGP and KKLN…IWKN. Ser-316 carries the phosphoserine modification. 2 TNase-like domains span residues 326–464 and 493–626; these read KDYS…MWSG and RKLS…MWHD. The Tudor domain maps to 695–755; that stretch reads KINVGMNVAA…SSLPDTYTKL (61 aa).

Its subcellular location is the cytoplasm. It localises to the cytosol. The chain is Staphylococcal nuclease domain-containing protein 1 from Schizosaccharomyces pombe (strain 972 / ATCC 24843) (Fission yeast).